The primary structure comprises 290 residues: uncharacterized protein (290 aa).

This is an uncharacterized protein from Ictalurid herpesvirus 1 (strain Auburn) (IcHV-1).